A 195-amino-acid chain; its full sequence is Probable prefoldin subunit 3 (195 aa).

This sequence belongs to the prefoldin subunit alpha family. Heterohexamer of two PFD-alpha type and four PFD-beta type subunits.

Binds specifically to cytosolic chaperonin (c-CPN) and transfers target proteins to it. Binds to nascent polypeptide chain and promotes folding in an environment in which there are many competing pathways for nonnative proteins. The protein is Probable prefoldin subunit 3 (pfdn3) of Dictyostelium discoideum (Social amoeba).